We begin with the raw amino-acid sequence, 133 residues long: Ribosome-binding factor A (133 aa).

It belongs to the RbfA family. In terms of assembly, monomer. Binds 30S ribosomal subunits, but not 50S ribosomal subunits or 70S ribosomes.

The protein localises to the cytoplasm. In terms of biological role, one of several proteins that assist in the late maturation steps of the functional core of the 30S ribosomal subunit. Associates with free 30S ribosomal subunits (but not with 30S subunits that are part of 70S ribosomes or polysomes). Required for efficient processing of 16S rRNA. May interact with the 5'-terminal helix region of 16S rRNA. In Cytophaga hutchinsonii (strain ATCC 33406 / DSM 1761 / CIP 103989 / NBRC 15051 / NCIMB 9469 / D465), this protein is Ribosome-binding factor A.